Reading from the N-terminus, the 443-residue chain is D-serine dehydratase (443 aa).

Lysine 118 bears the N6-(pyridoxal phosphate)lysine mark.

Belongs to the serine/threonine dehydratase family. DsdA subfamily. In terms of assembly, monomer. The cofactor is pyridoxal 5'-phosphate.

The catalysed reaction is D-serine = pyruvate + NH4(+). The protein is D-serine dehydratase of Escherichia coli O17:K52:H18 (strain UMN026 / ExPEC).